The chain runs to 849 residues: ATP-binding cassette sub-family B member 6 (849 aa).

At 1–25 (MVRLGSYCEHNGSISQAWLDSGLSP) the chain is on the lumenal side. The tract at residues 1–195 (MVRLGSYCEH…TLFLFVLGIR (195 aa)) is required for the lysosomal targeting. The segment at 1 to 227 (MVRLGSYCEH…SQPLLRDPNQ (227 aa)) is required for ATPase activity. Residues Cys-8 and Cys-26 are joined by a disulfide bond. N-linked (GlcNAc...) asparagine glycosylation is present at Asn-11. A helical membrane pass occupies residues 26–46 (CFYFTLVPSVLLSFSFLLGAL). Residues 47–72 (QSALYARHSTTMEPKYIPRSRLYRLQ) lie on the Cytoplasmic side of the membrane. The helical transmembrane segment at 73 to 93 (IVLSVVLILQSVIGLIWQAAG) threads the bilayer. At 94–98 (TDVVY) the chain is on the lumenal side. A helical transmembrane segment spans residues 99 to 119 (GYMIVHGCLSVVAWGFSLWLL). Topologically, residues 120–136 (HLERTRALVREKSRGHG) are cytoplasmic. Residues 137–157 (VVLLLFWALAFAAENLAFISW) form a helical membrane-spanning segment. The Lumenal portion of the chain corresponds to 158–173 (QSPNWWWLSRDTVPQK). The helical transmembrane segment at 174 to 194 (VQFGLWITRYVCTLFLFVLGI) threads the bilayer. Residues 195-254 (RAPGRPRKPYIVLINEDERDVETSQPLLRDPNQSTWQGFKKKLLLVMQYIWPRRNIPLQL) lie on the Cytoplasmic side of the membrane. A helical membrane pass occupies residues 255–275 (LVALCMGLMGLERAINVFVPI). Residues 256-547 (VALCMGLMGL…FGTYYRMIQS (292 aa)) form the ABC transmembrane type-1 domain. Topologically, residues 276-291 (YAKKIVDGLTEDSTWN) are lumenal. A helical transmembrane segment spans residues 292-312 (ILAVTVCIYVLLKFLQGGGAG). At 313–373 (TTGFLSNLRT…VDRGTSSINS (61 aa)) the chain is on the cytoplasmic side. Residues 374-394 (LLSYIVFSILPTIADIVIGIV) traverse the membrane as a helical segment. Topologically, residues 395–401 (YFTSSFN) are lumenal. A helical transmembrane segment spans residues 402–422 (AWFGLIIFVCMTLYLTLTIII). The Cytoplasmic portion of the chain corresponds to 423–492 (TEWRTKYRRE…ASLAMLNQTQ (70 aa)). A helical membrane pass occupies residues 493-513 (NLIIGLGLLAGSLLCAYFVTE). At 514–520 (NKFKVGD) the chain is on the lumenal side. A helical membrane pass occupies residues 521-541 (YVLFGTYIIQLYTPLNWFGTY). Residues 542 to 849 (YRMIQSSFID…PPKATPRRGH (308 aa)) lie on the Cytoplasmic side of the membrane. The 235-residue stretch at 581–815 (IEFENVHFSY…GGVYAGMWQK (235 aa)) folds into the ABC transporter domain. Residues Tyr-590 and 614–625 (GPSGSGKSTIIR) contribute to the ATP site. The segment covering 814 to 825 (QKQQSGSESSSD) has biased composition (low complexity). The tract at residues 814-849 (QKQQSGSESSSDSDSERKDRTSEKLQPPKATPRRGH) is disordered. Residues 827 to 836 (DSERKDRTSE) are compositionally biased toward basic and acidic residues.

This sequence belongs to the ABC transporter superfamily. ABCB family. Heavy Metal importer (TC 3.A.1.210) subfamily. In terms of assembly, homodimer. N-glycosylated.

It localises to the cell membrane. The protein localises to the mitochondrion outer membrane. Its subcellular location is the endoplasmic reticulum membrane. The protein resides in the golgi apparatus membrane. It is found in the endosome membrane. It localises to the lysosome membrane. The protein localises to the late endosome membrane. Its subcellular location is the early endosome membrane. The protein resides in the secreted. It is found in the extracellular exosome. It localises to the mitochondrion. The protein localises to the endosome. Its subcellular location is the multivesicular body membrane. The protein resides in the melanosome membrane. It catalyses the reaction heme b(in) + ATP + H2O = heme b(out) + ADP + phosphate + H(+). The enzyme catalyses coproporphyrin III(in) + ATP + H2O = coproporphyrin III(out) + ADP + phosphate + H(+). The catalysed reaction is pheophorbide a(in) + ATP + H2O = pheophorbide a(out) + ADP + phosphate + H(+). It carries out the reaction coproporphyrinogen III(in) + ATP + H2O = coproporphyrinogen III(out) + ADP + phosphate + H(+). It catalyses the reaction protoporphyrin IX(in) + ATP + H2O = protoporphyrin IX(out) + ADP + phosphate + H(+). The enzyme catalyses coproporphyrin I(in) + ATP + H2O = coproporphyrin I(out) + ADP + phosphate + H(+). The catalysed reaction is uroporphyrin I(in) + ATP + H2O = uroporphyrin I(out) + ADP + phosphate + H(+). It carries out the reaction uroporphyrin III(in) + ATP + H2O = uroporphyrin III(out) + ADP + phosphate + H(+). In terms of biological role, ATP-dependent transporter that catalyzes the transport of a broad-spectrum of porphyrins from the cytoplasm to the extracellular space through the plasma membrane or into the vesicle lumen. May also function as an ATP-dependent importer of porphyrins from the cytoplasm into the mitochondria, in turn may participate in the de novo heme biosynthesis regulation and in the coordination of heme and iron homeostasis during phenylhydrazine stress. May also play a key role in the early steps of melanogenesis producing PMEL amyloid fibrils. In vitro, it confers to cells a resistance to toxic metal such as arsenic and cadmium and against chemotherapeutics agent such as 5-fluorouracil, SN-38 and vincristin. In addition may play a role in the transition metal homeostasis. The polypeptide is ATP-binding cassette sub-family B member 6 (abcb6) (Xenopus tropicalis (Western clawed frog)).